Reading from the N-terminus, the 245-residue chain is Ribonuclease PH (245 aa).

Phosphate is bound by residues Arg86 and 124 to 126 (GTR).

It belongs to the RNase PH family. In terms of assembly, homohexameric ring arranged as a trimer of dimers. It has been suggested that the active form is the dimer which binds tRNA and that the hexameric form protects the substrate recognition loop (approximately residues 65-82) from proteolysis.

It catalyses the reaction tRNA(n+1) + phosphate = tRNA(n) + a ribonucleoside 5'-diphosphate. Phosphorolytic 3'-5' exoribonuclease that plays an important role in tRNA 3'-end maturation. Removes nucleotide residues following the 3'-CCA terminus of tRNAs; can also add nucleotides to the ends of RNA molecules by using nucleoside diphosphates as substrates, but this may not be physiologically important. Probably plays a role in initiation of 16S rRNA degradation (leading to ribosome degradation) during starvation. Plays a role in the secondary pathway of 23S rRNA 3' end maturation. This chain is Ribonuclease PH, found in Bacillus subtilis (strain 168).